Here is a 219-residue protein sequence, read N- to C-terminus: MYDNALHIRHLGKQDYESVWHAMQHYTDNRDENSQDEIWIVEHTPVFTQGQAGKSEHILNPGDIPVIQVDRGGQVTYHGPGQLVVYPLLDIKRLKVGVRQLVTHIEQSIINMLKRYQIEAYAKADAPGVYVEERKIASLGLRIRKGCSFHGLALNVDMDMSPFQRINPCGYAGMEMIQCKQLGGPQTVEEAGAQLIETLSQELGLDKLVHHQGLPESYE.

The region spanning 32-207 (ENSQDEIWIV…TLSQELGLDK (176 aa)) is the BPL/LPL catalytic domain. Substrate-binding positions include 71–78 (RGGQVTYH), 138–140 (SLG), and 151–153 (GLA). Residue cysteine 169 is the Acyl-thioester intermediate of the active site.

This sequence belongs to the LipB family.

Its subcellular location is the cytoplasm. It catalyses the reaction octanoyl-[ACP] + L-lysyl-[protein] = N(6)-octanoyl-L-lysyl-[protein] + holo-[ACP] + H(+). It functions in the pathway protein modification; protein lipoylation via endogenous pathway; protein N(6)-(lipoyl)lysine from octanoyl-[acyl-carrier-protein]: step 1/2. In terms of biological role, catalyzes the transfer of endogenously produced octanoic acid from octanoyl-acyl-carrier-protein onto the lipoyl domains of lipoate-dependent enzymes. Lipoyl-ACP can also act as a substrate although octanoyl-ACP is likely to be the physiological substrate. The polypeptide is Octanoyltransferase (Shewanella pealeana (strain ATCC 700345 / ANG-SQ1)).